Consider the following 513-residue polypeptide: Histidine ammonia-lyase (513 aa).

The 5-imidazolinone (Ala-Gly) cross-link spans 143–145 (ASG). S144 is modified (2,3-didehydroalanine (Ser)).

The protein belongs to the PAL/histidase family. Contains an active site 4-methylidene-imidazol-5-one (MIO), which is formed autocatalytically by cyclization and dehydration of residues Ala-Ser-Gly.

The protein resides in the cytoplasm. The catalysed reaction is L-histidine = trans-urocanate + NH4(+). It participates in amino-acid degradation; L-histidine degradation into L-glutamate; N-formimidoyl-L-glutamate from L-histidine: step 1/3. This is Histidine ammonia-lyase from Paracoccus denitrificans (strain Pd 1222).